A 69-amino-acid polypeptide reads, in one-letter code: Putative membrane protein insertion efficiency factor (69 aa).

The protein belongs to the UPF0161 family.

It localises to the cell inner membrane. Its function is as follows. Could be involved in insertion of integral membrane proteins into the membrane. The protein is Putative membrane protein insertion efficiency factor of Geobacter sulfurreducens (strain ATCC 51573 / DSM 12127 / PCA).